Consider the following 116-residue polypeptide: Aspartate 1-decarboxylase (116 aa).

Catalysis depends on Ser25, which acts as the Schiff-base intermediate with substrate; via pyruvic acid. The residue at position 25 (Ser25) is a Pyruvic acid (Ser). Thr57 is a substrate binding site. Tyr58 serves as the catalytic Proton donor. 72–74 lines the substrate pocket; sequence GAA.

Belongs to the PanD family. Heterooctamer of four alpha and four beta subunits. The cofactor is pyruvate. Post-translationally, is synthesized initially as an inactive proenzyme, which is activated by self-cleavage at a specific serine bond to produce a beta-subunit with a hydroxyl group at its C-terminus and an alpha-subunit with a pyruvoyl group at its N-terminus.

The protein resides in the cytoplasm. The enzyme catalyses L-aspartate + H(+) = beta-alanine + CO2. It participates in cofactor biosynthesis; (R)-pantothenate biosynthesis; beta-alanine from L-aspartate: step 1/1. Its function is as follows. Catalyzes the pyruvoyl-dependent decarboxylation of aspartate to produce beta-alanine. This chain is Aspartate 1-decarboxylase, found in Helicobacter acinonychis (strain Sheeba).